The chain runs to 279 residues: Large ribosomal subunit protein uL2 (279 aa).

The segment at 224-279 (AMNPIDHPHGGGEGRTSGGRHPVTPWGKGTKGNRTRKSKASDKLIVRSRHAKKKGR) is disordered. The span at 269-279 (VRSRHAKKKGR) shows a compositional bias: basic residues.

The protein belongs to the universal ribosomal protein uL2 family. As to quaternary structure, part of the 50S ribosomal subunit. Forms a bridge to the 30S subunit in the 70S ribosome.

Functionally, one of the primary rRNA binding proteins. Required for association of the 30S and 50S subunits to form the 70S ribosome, for tRNA binding and peptide bond formation. It has been suggested to have peptidyltransferase activity; this is somewhat controversial. Makes several contacts with the 16S rRNA in the 70S ribosome. The protein is Large ribosomal subunit protein uL2 of Cereibacter sphaeroides (strain ATCC 17029 / ATH 2.4.9) (Rhodobacter sphaeroides).